A 171-amino-acid chain; its full sequence is Protein-export protein SecB (171 aa).

This sequence belongs to the SecB family. As to quaternary structure, homotetramer, a dimer of dimers. One homotetramer interacts with 1 SecA dimer.

The protein resides in the cytoplasm. In terms of biological role, one of the proteins required for the normal export of preproteins out of the cell cytoplasm. It is a molecular chaperone that binds to a subset of precursor proteins, maintaining them in a translocation-competent state. It also specifically binds to its receptor SecA. This is Protein-export protein SecB from Histophilus somni (strain 2336) (Haemophilus somnus).